The primary structure comprises 214 residues: Charged multivesicular body protein 2b (214 aa).

Residues 25–55 (QRTITRDRAALEKQERQLELEIKKMAKTGNK) adopt a coiled-coil conformation. Residues 179-201 (AKAPSAARGLPSASTSKASTISD) are disordered. Residues 190-199 (SASTSKASTI) show a composition bias toward polar residues. The short motif at 202–212 (EEIERQLKALG) is the MIT-interacting motif element.

It belongs to the SNF7 family. Probable core component of the endosomal sorting required for transport complex III (ESCRT-III). ESCRT-III components are thought to multimerize to form a flat lattice on the perimeter membrane of the endosome.

It localises to the cytoplasm. Its subcellular location is the cytosol. The protein resides in the late endosome membrane. Probable core component of the endosomal sorting required for transport complex III (ESCRT-III) which is involved in multivesicular bodies (MVBs) formation and sorting of endosomal cargo proteins into MVBs. MVBs contain intraluminal vesicles (ILVs) that are generated by invagination and scission from the limiting membrane of the endosome and mostly are delivered to lysosomes enabling degradation of membrane proteins, such as stimulated growth factor receptors, lysosomal enzymes and lipids. The sequence is that of Charged multivesicular body protein 2b (CHMP2B) from Gallus gallus (Chicken).